Reading from the N-terminus, the 768-residue chain is MDRGQVLEQLLPELTGLLSLLDHEYLSDTTLEKKMAVASILQSLQPLPAKEVSYLYVNTADLHSGPSFVESLFEEFDCDLSDLRDMPEDDGEPSKGASPELAKSPRLRNAADLPPPLPNKPPPEDYYEEALPLGPGKSPEYISSHNGCSPSHSIVDGYYEDADSSYPATRVNGELKSSYNDSDAMSSSYESYDEEEEEGKSPQPRHQWPSEEASMHLVRECRICAFLLRKKRFGQWAKQLTVIREDQLLCYKSSKDRQPHLRLALDTCSIIYVPKDSRHKRHELRFTQGATEVLVLALQSREQAEEWLKVIREVSKPVGGAEGVEVPRSPVLLCKLDLDKRLSQEKQTSDSDSVGVGDNCSTLGRRETCDHGKGKKSSLAELKGSMSRAAGRKITRIIGFSKKKTLADDLQTSSTEEEVPCCGYLNVLVNQGWKERWCRLKCNTLYFHKDHMDLRTHVNAIALQGCEVAPGFGPRHPFAFRILRNRQEVAILEASCSEDMGRWLGLLLVEMGSRVTPEALHYDYVDVETLTSIVSAGRNSFLYARSCQNQWPEPRVYDDVPYEKMQDEEPERPTGAQVKRHASSCSEKSHRVDPQVKVKRHASSANQYKYGKNRAEEDARRYLVEKEKLEKEKETIRTELIALRQEKRELKEAIRSSPGAKLKALEEAVATLEAQCRAKEERRIDLELKLVAVKERLQQSLAGGPALGLSVSSKPKSGETANKPQNSVPEQPLPVNCVSELRKRSPSIVASNQGRVLQKAKEWEMKKT.

Positions 82 to 145 (DLRDMPEDDG…GKSPEYISSH (64 aa)) are disordered. 4 positions are modified to phosphoserine: S94, S98, S104, and S153. A disordered region spans residues 173–211 (GELKSSYNDSDAMSSSYESYDEEEEEGKSPQPRHQWPSE). The span at 177–190 (SSYNDSDAMSSSYE) shows a compositional bias: low complexity. Residues 220–316 (ECRICAFLLR…WLKVIREVSK (97 aa)) enclose the PH 1 domain. Residues S329 and S343 each carry the phosphoserine modification. Positions 418 to 512 (EVPCCGYLNV…WLGLLLVEMG (95 aa)) constitute a PH 2 domain. A Phosphotyrosine modification is found at Y557. A disordered region spans residues 566 to 604 (QDEEPERPTGAQVKRHASSCSEKSHRVDPQVKVKRHASS). Basic and acidic residues predominate over residues 587–596 (EKSHRVDPQV). Residues 611–700 (GKNRAEEDAR…VAVKERLQQS (90 aa)) adopt a coiled-coil conformation. Residues 705–768 (PALGLSVSSK…KAKEWEMKKT (64 aa)) form a disordered region. Over residues 710–729 (SVSSKPKSGETANKPQNSVP) the composition is skewed to polar residues. S747 carries the phosphoserine modification. Over residues 759 to 768 (KAKEWEMKKT) the composition is skewed to basic and acidic residues.

In terms of assembly, interacts with CTTN. As to expression, expressed in breast, colon and brain. In all 3 tissues, expressed in the microvasculature (at protein level). In addition, in the breast, found in the contractile myoepithelial cell layer which surrounds the breast ducts (at protein level). In the colon, expressed in the mucous membrane and colonic crypts and in the smooth muscle cell layer which provide movement of the colon (at protein level). In the cerebellum, localized around the Purkinje neurons and the granule cells of the granular layer, but not inside cell bodies (at protein level). Outside of the cerebellar cortex, expressed in glial cells (at protein level). Highly expressed away from the cell bodies within the dentate nucleus (at protein level).

It localises to the cytoplasm. It is found in the cell projection. The protein resides in the podosome. The protein localises to the invadopodium. Its subcellular location is the cytoskeleton. It localises to the stress fiber. Functionally, may be involved in podosome and invadosome formation. The polypeptide is Actin filament-associated protein 1-like 1 (AFAP1L1) (Homo sapiens (Human)).